Consider the following 307-residue polypeptide: Urease accessory protein UreD (307 aa).

The protein belongs to the UreD family. In terms of assembly, ureD, UreF and UreG form a complex that acts as a GTP-hydrolysis-dependent molecular chaperone, activating the urease apoprotein by helping to assemble the nickel containing metallocenter of UreC. The UreE protein probably delivers the nickel.

The protein localises to the cytoplasm. Required for maturation of urease via the functional incorporation of the urease nickel metallocenter. The polypeptide is Urease accessory protein UreD (Prochlorococcus marinus (strain NATL2A)).